A 407-amino-acid polypeptide reads, in one-letter code: Na(+)-translocating NADH-quinone reductase subunit F (407 aa).

The chain crosses the membrane as a helical span at residues 4 to 24 (IILGVFFFTAIVVALVFVILG). The 2Fe-2S ferredoxin-type domain occupies 33-125 (GNVEVLINGE…NMKIHVHEEV (93 aa)). [2Fe-2S] cluster-binding residues include cysteine 68, cysteine 74, cysteine 77, and cysteine 109. In terms of domain architecture, FAD-binding FR-type spans 128-269 (VKKWECTVRS…SGPFGEFFAR (142 aa)).

This sequence belongs to the NqrF family. As to quaternary structure, composed of six subunits; NqrA, NqrB, NqrC, NqrD, NqrE and NqrF. The cofactor is [2Fe-2S] cluster. It depends on FAD as a cofactor.

The protein resides in the cell inner membrane. The catalysed reaction is a ubiquinone + n Na(+)(in) + NADH + H(+) = a ubiquinol + n Na(+)(out) + NAD(+). NQR complex catalyzes the reduction of ubiquinone-1 to ubiquinol by two successive reactions, coupled with the transport of Na(+) ions from the cytoplasm to the periplasm. The first step is catalyzed by NqrF, which accepts electrons from NADH and reduces ubiquinone-1 to ubisemiquinone by a one-electron transfer pathway. This is Na(+)-translocating NADH-quinone reductase subunit F from Methylococcus capsulatus (strain ATCC 33009 / NCIMB 11132 / Bath).